A 315-amino-acid polypeptide reads, in one-letter code: ADP-L-glycero-D-manno-heptose-6-epimerase (315 aa).

NADP(+) is bound by residues 10–11 (FI), 31–32 (DD), Lys-38, Lys-53, 76–80 (QGACS), and Asn-93. Tyr-140 functions as the Proton acceptor in the catalytic mechanism. Lys-144 lines the NADP(+) pocket. Asn-169 is a substrate binding site. NADP(+)-binding residues include Val-170 and Lys-178. The Proton acceptor role is filled by Lys-178. Residues Ser-180, His-187, 201–204 (FEGC), Arg-214, and Tyr-278 contribute to the substrate site.

This sequence belongs to the NAD(P)-dependent epimerase/dehydratase family. HldD subfamily. Homopentamer. The cofactor is NADP(+).

It carries out the reaction ADP-D-glycero-beta-D-manno-heptose = ADP-L-glycero-beta-D-manno-heptose. The protein operates within nucleotide-sugar biosynthesis; ADP-L-glycero-beta-D-manno-heptose biosynthesis; ADP-L-glycero-beta-D-manno-heptose from D-glycero-beta-D-manno-heptose 7-phosphate: step 4/4. Catalyzes the interconversion between ADP-D-glycero-beta-D-manno-heptose and ADP-L-glycero-beta-D-manno-heptose via an epimerization at carbon 6 of the heptose. The polypeptide is ADP-L-glycero-D-manno-heptose-6-epimerase (Syntrophotalea carbinolica (strain DSM 2380 / NBRC 103641 / GraBd1) (Pelobacter carbinolicus)).